We begin with the raw amino-acid sequence, 161 residues long: Nucleotide-binding protein Sden_0770 (161 aa).

Belongs to the YajQ family.

Nucleotide-binding protein. The protein is Nucleotide-binding protein Sden_0770 of Shewanella denitrificans (strain OS217 / ATCC BAA-1090 / DSM 15013).